The sequence spans 48 residues: uncharacterized protein (48 aa).

Residues Ser21–Phe43 form a helical membrane-spanning segment.

The protein resides in the membrane. This is an uncharacterized protein from Schizosaccharomyces pombe (strain 972 / ATCC 24843) (Fission yeast).